An 86-amino-acid chain; its full sequence is Large ribosomal subunit protein bL31B (86 aa).

Belongs to the bacterial ribosomal protein bL31 family. Type B subfamily. In terms of assembly, part of the 50S ribosomal subunit.

This chain is Large ribosomal subunit protein bL31B, found in Saccharopolyspora erythraea (strain ATCC 11635 / DSM 40517 / JCM 4748 / NBRC 13426 / NCIMB 8594 / NRRL 2338).